The following is a 442-amino-acid chain: Glutamyl-tRNA reductase (442 aa).

Substrate contacts are provided by residues 49-52 (TCNR), serine 109, 114-116 (EGQ), and glutamine 120. Cysteine 50 acts as the Nucleophile in catalysis. 198 to 203 (GAGRMA) serves as a coordination point for NADP(+). The interval 420–442 (MAAAQRLFDLPGDDADRDRSDAK) is disordered. Basic and acidic residues predominate over residues 433-442 (DADRDRSDAK).

Belongs to the glutamyl-tRNA reductase family. In terms of assembly, homodimer.

It carries out the reaction (S)-4-amino-5-oxopentanoate + tRNA(Glu) + NADP(+) = L-glutamyl-tRNA(Glu) + NADPH + H(+). The protein operates within porphyrin-containing compound metabolism; protoporphyrin-IX biosynthesis; 5-aminolevulinate from L-glutamyl-tRNA(Glu): step 1/2. It functions in the pathway porphyrin-containing compound metabolism; chlorophyll biosynthesis. Functionally, catalyzes the NADPH-dependent reduction of glutamyl-tRNA(Glu) to glutamate 1-semialdehyde (GSA). In Synechococcus sp. (strain RCC307), this protein is Glutamyl-tRNA reductase.